The sequence spans 255 residues: 4-hydroxy-tetrahydrodipicolinate reductase (255 aa).

NAD(+) is bound by residues Gly8–Met13, Ala88–Thr90, and Ser112–Met115. His144 functions as the Proton donor/acceptor in the catalytic mechanism. His145 is a (S)-2,3,4,5-tetrahydrodipicolinate binding site. The Proton donor role is filled by Lys148. Gly154 to Thr155 is a (S)-2,3,4,5-tetrahydrodipicolinate binding site.

Belongs to the DapB family.

It localises to the cytoplasm. The enzyme catalyses (S)-2,3,4,5-tetrahydrodipicolinate + NAD(+) + H2O = (2S,4S)-4-hydroxy-2,3,4,5-tetrahydrodipicolinate + NADH + H(+). The catalysed reaction is (S)-2,3,4,5-tetrahydrodipicolinate + NADP(+) + H2O = (2S,4S)-4-hydroxy-2,3,4,5-tetrahydrodipicolinate + NADPH + H(+). Its pathway is amino-acid biosynthesis; L-lysine biosynthesis via DAP pathway; (S)-tetrahydrodipicolinate from L-aspartate: step 4/4. Catalyzes the conversion of 4-hydroxy-tetrahydrodipicolinate (HTPA) to tetrahydrodipicolinate. The chain is 4-hydroxy-tetrahydrodipicolinate reductase from Sulfurovum sp. (strain NBC37-1).